A 337-amino-acid polypeptide reads, in one-letter code: Anthranilate phosphoribosyltransferase (337 aa).

5-phospho-alpha-D-ribose 1-diphosphate is bound by residues glycine 81, 84–85, serine 89, 91–94, 109–117, and alanine 121; these read GD, NVST, and KHGNRALSS. An anthranilate-binding site is contributed by glycine 81. Serine 93 is a Mg(2+) binding site. Asparagine 112 serves as a coordination point for anthranilate. Arginine 167 contributes to the anthranilate binding site. 2 residues coordinate Mg(2+): aspartate 226 and glutamate 227.

It belongs to the anthranilate phosphoribosyltransferase family. In terms of assembly, homodimer. Mg(2+) is required as a cofactor.

The enzyme catalyses N-(5-phospho-beta-D-ribosyl)anthranilate + diphosphate = 5-phospho-alpha-D-ribose 1-diphosphate + anthranilate. It functions in the pathway amino-acid biosynthesis; L-tryptophan biosynthesis; L-tryptophan from chorismate: step 2/5. Catalyzes the transfer of the phosphoribosyl group of 5-phosphorylribose-1-pyrophosphate (PRPP) to anthranilate to yield N-(5'-phosphoribosyl)-anthranilate (PRA). The chain is Anthranilate phosphoribosyltransferase from Bradyrhizobium sp. (strain BTAi1 / ATCC BAA-1182).